The chain runs to 317 residues: Protease 7 (317 aa).

A signal peptide spans 1 to 20 (MRAKLLGIVLTTPIAISSFA). Topologically, residues 21–31 (STETLSFTPDN) are periplasmic. A beta stranded transmembrane segment spans residues 32-41 (INADISLGTL). Residues 42 to 69 (SGKTKERVYLAEEGGRKVSQLDWKFNNA) are Extracellular-facing. Residues 70 to 78 (AIIKGAINW) traverse the membrane as a beta stranded segment. Topologically, residues 79 to 83 (DLMPQ) are periplasmic. A beta stranded membrane pass occupies residues 84–92 (ISIGAAGWT). The Extracellular portion of the chain corresponds to 93–130 (TLGSRGGNMVDQDWMDSSNPGTWTDESRHPDTQLNYAN). Residues Asp103 and Asp105 contribute to the active site. The chain crosses the membrane as a beta stranded span at residues 131 to 140 (EFDLNIKGWL). Residues 141-145 (LNEPN) are Periplasmic-facing. The chain crosses the membrane as a beta stranded span at residues 146-156 (YRLGLMAGYQE). At 157–197 (SRYSFTARGGSYIYSSEEGFRDDIGSFPNGERAIGYKQRFK) the chain is on the extracellular side. A beta stranded membrane pass occupies residues 198–209 (MPYIGLTGSYRY). Residues 210–211 (ED) are Periplasmic-facing. Residues 212–221 (FELGGTFKYS) form a beta stranded membrane-spanning segment. Residues 222 to 250 (GWVEASDNDEHYDPGKRITYRSKVKDQNY) are Extracellular-facing. Residues Asp230 and His232 contribute to the active site. A beta stranded transmembrane segment spans residues 251-261 (YSVSVNAGYYV). Topologically, residues 262 to 264 (TPN) are periplasmic. The chain crosses the membrane as a beta stranded span at residues 265–274 (AKVYVEGTWN). The Extracellular portion of the chain corresponds to 275–306 (RVTNKKGNTSLYDHNDNTSDYSKNGAGIENYN). Residues 307 to 316 (FITTAGLKYT) traverse the membrane as a beta stranded segment. Phe317 is a topological domain (periplasmic).

The protein belongs to the peptidase A26 family. In terms of assembly, homopentamer.

Its subcellular location is the cell outer membrane. The catalysed reaction is Has a virtual requirement for Arg in the P1 position and a slightly less stringent preference for this residue in the P1' position, which can also contain Lys, Gly or Val.. With respect to regulation, inhibited by zinc. Protease that can cleave T7 RNA polymerase, ferric enterobactin receptor protein (FEP), antimicrobial peptide protamine and other proteins. This protease has a specificity for paired basic residues. The sequence is that of Protease 7 (ompT) from Escherichia coli O157:H7.